The chain runs to 705 residues: MWLLYLLVPALFCRAGGSIPIPQKLFGEVTSPLFPKPYPNNFETTTVITVPTGYRVKLVFQQFDLEPSEGCFYDYVKISADKKSLGRFCGQLGSPLGNPPGKKEFMSQGNKMLLTFHTDFSNEENGTIMFYKGFLAYYQAVDLDECASRSKSGEEDPQPQCQHLCHNYVGGYFCSCRPGYELQEDTHSCQAECSSELYTEASGYISSLEYPRSYPPDLRCNYSIRVERGLTLHLKFLEPFDIDDHQQVHCPYDQLQIYANGKNIGEFCGKQRPPDLDTSSNAVDLLFFTDESGDSRGWKLRYTTEIIKCPQPKTLDEFTIIQNLQPQYQFRDYFIATCKQGYQLIEGNQVLHSFTAVCQDDGTWHRAMPRCKIKDCGQPRNLPNGDFRYTTTMGVNTYKARIQYYCHEPYYKMQTRAGSRESEQGVYTCTAQGIWKNEQKGEKIPRCLPVCGKPVNPVEQRQRIIGGQKAKMGNFPWQVFTNIHGRGGGALLGDRWILTAAHTLYPKEHEAQSNASLDVFLGHTNVEELMKLGNHPIRRVSVHPDYRQDESYNFEGDIALLELENSVTLGPNLLPICLPDNDTFYDLGLMGYVSGFGVMEEKIAHDLRFVRLPVANPQACENWLRGKNRMDVFSQNMFCAGHPSLKQDACQGDSGGVFAVRDPNTDRWVATGIVSWGIGCSRGYGFYTKVLNYVDWIKKEMEEED.

The signal sequence occupies residues Met-1 to Gly-17. The region spanning Ser-18–Val-141 is the CUB 1 domain. Positions 66, 74, and 119 each coordinate Ca(2+). Cys-71 and Cys-89 form a disulfide bridge. N-linked (GlcNAc...) asparagine glycosylation occurs at Asn-125. Positions 142, 143, and 145 each coordinate Ca(2+). The EGF-like; calcium-binding domain maps to Asp-142–Gln-190. 4 disulfides stabilise this stretch: Cys-146–Cys-165, Cys-161–Cys-174, Cys-176–Cys-189, and Cys-193–Cys-220. 3 residues coordinate Ca(2+): Asn-167, Tyr-168, and Gly-171. Asn-167 is modified ((3R)-3-hydroxyasparagine). The 113-residue stretch at Cys-193 to Glu-305 folds into the CUB 2 domain. The residue at position 206 (Ser-206) is a Phosphoserine; by CK2. Asn-221 carries an N-linked (GlcNAc...) asparagine glycan. Ca(2+) is bound by residues Asp-243, Asp-253, Asp-290, and Asp-294. The cysteines at positions 250 and 268 are disulfide-linked. Sushi domains follow at residues Ile-307–Ile-373 and Lys-374–Pro-449. Disulfide bonds link Cys-309–Cys-358, Cys-338–Cys-371, Cys-376–Cys-429, Cys-406–Cys-447, and Cys-451–Cys-577. One can recognise a Peptidase S1 domain in the interval Ile-464–Glu-702. Catalysis depends on His-502, which acts as the Charge relay system. N-linked (GlcNAc...) asparagine glycosylation occurs at Asn-514. The active-site Charge relay system is Asp-557. A glycan (N-linked (GlcNAc...) asparagine) is linked at Asn-581. 2 disulfide bridges follow: Cys-620-Cys-639 and Cys-650-Cys-680. Ser-654 functions as the Charge relay system in the catalytic mechanism.

It belongs to the peptidase S1 family. In terms of assembly, core component of the complement C1 complex, a calcium-dependent complex composed of 1 molecule of the C1Q subcomplex, 2 molecules of C1R and 2 molecules of C1S. The C1Q subcomplex is composed 18 subunits: 3 chains of C1QA, C1QB, and C1QC trimerize to form 6 collagen-like triple helices connected to six globular ligand-recognition modules. Within the C1 complex, C1R is a dimer of identical chains, each of which is activated by cleavage into two chains, heavy and light, connected by disulfide bonds. Post-translationally, cleaved and activated by autocatalytic processing to generate Complement C1r subcomponent heavy and light chains that are connected by disulfide bonds. The iron and 2-oxoglutarate dependent 3-hydroxylation of aspartate and asparagine is (R) stereospecific within EGF domains.

The protein localises to the secreted. Its subcellular location is the cell surface. The catalysed reaction is Selective cleavage of Lys(or Arg)-|-Ile bond in complement subcomponent C1s to form the active form of C1s (EC 3.4.21.42).. Its activity is regulated as follows. Activated by the C1Q subcomplex of the C1 complex following C1Q binding to immunoglobulins (IgG or IgM) complexed with antigens to form antigen-antibody complexes on the surface of pathogens. Immunoglobulin-binding promotes autoactivation of C1R, which results in the cleavage of the Arg-Ile bond in the catalytic domain. Serine protease component of the complement C1 complex, a multiprotein complex that initiates the classical pathway of the complement system, a cascade of proteins that leads to phagocytosis and breakdown of pathogens and signaling that strengthens the adaptive immune system. C1R catalyzes the first enzymatic step in the classical complement pathway: it is activated by the C1Q subcomplex of the C1 complex, which associates with IgG or IgM immunoglobulins complexed with antigens to form antigen-antibody complexes on the surface of pathogens. Immunoglobulin-binding promotes the autocatalytic cleavage and activation of C1R. Activated C1R then cleaves and activates C1S, the second protease of the classical complement pathway. It is unclear if C1R activates C1S within single, strained C1 complexes or between neighboring C1 complexes on surfaces. The protein is Complement C1r subcomponent of Homo sapiens (Human).